A 1246-amino-acid polypeptide reads, in one-letter code: Stromal processing peptidase, chloroplastic (1246 aa).

The transit peptide at 1-136 directs the protein to the chloroplast; sequence MASFPSPPLA…AKIRRRHVLH (136 aa). His-228 serves as a coordination point for Zn(2+). Glu-231 (proton acceptor) is an active-site residue. A Zn(2+)-binding site is contributed by His-232. Residue Glu-302 is part of the active site. Glu-309 contributes to the Zn(2+) binding site.

Belongs to the peptidase M16 family. It depends on Zn(2+) as a cofactor. As to expression, widely expressed.

It localises to the plastid. Its subcellular location is the chloroplast stroma. Cleaves presequences (transit peptides) from chloroplastic protein precursors. Initially recognizes a precursor by binding to the C-terminus of its transit peptide and then removes the transit peptide in a single endoproteolytic step. In a next step, pursues the cleavage of transit peptide to a subfragment form. This is Stromal processing peptidase, chloroplastic from Oryza sativa subsp. indica (Rice).